A 363-amino-acid polypeptide reads, in one-letter code: Probable cinnamyl alcohol dehydrogenase 6 (363 aa).

Zn(2+) is bound at residue C51. S53 contributes to the NADP(+) binding site. 7 residues coordinate Zn(2+): H73, E74, C104, C107, C110, C118, and C167. Residues S171, 192 to 197 (GLGGLG), 215 to 220 (SSTTGK), T255, G279, and 302 to 304 (SGI) each bind NADP(+).

It belongs to the zinc-containing alcohol dehydrogenase family. Homodimer. It depends on Zn(2+) as a cofactor. In terms of tissue distribution, expressed in the primary and lateral roots, and root caps. Expressed in the hypocotyl, cotyledon veins and hydathodes. In stems, expressed in the vascular cambium, interfascicular cambium and developing xylem. Expressed in the style, anthers, stamen filaments, vascular tissues of sepals, stigmatic regions in flowers, and abscission and style regions of siliques.

The catalysed reaction is (E)-cinnamyl alcohol + NADP(+) = (E)-cinnamaldehyde + NADPH + H(+). The enzyme catalyses (E)-coniferol + NADP(+) = (E)-coniferaldehyde + NADPH + H(+). It catalyses the reaction (E)-sinapyl alcohol + NADP(+) = (E)-sinapaldehyde + NADPH + H(+). It carries out the reaction (E)-4-coumaroyl alcohol + NADP(+) = (E)-4-coumaraldehyde + NADPH + H(+). The catalysed reaction is (E)-caffeyl alcohol + NADP(+) = (E)-caffeyl aldehyde + NADPH + H(+). Its pathway is aromatic compound metabolism; phenylpropanoid biosynthesis. Its function is as follows. Involved in lignin biosynthesis. Catalyzes the final step specific for the production of lignin monomers. Catalyzes the NADPH-dependent reduction of coniferaldehyde, 5-hydroxyconiferaldehyde, sinapaldehyde, 4-coumaraldehyde and caffeyl aldehyde to their respective alcohols. The chain is Probable cinnamyl alcohol dehydrogenase 6 (CAD6) from Arabidopsis thaliana (Mouse-ear cress).